The following is a 53-amino-acid chain: Rubredoxin (53 aa).

A Rubredoxin-like domain is found at 1-53 (MTKYVCTVCGYVYDPEVGDPDNNINPGTSFQDIPEDWVCPLCGVGKDQFEEEA). Positions 6, 9, 39, and 42 each coordinate Fe cation.

The protein belongs to the rubredoxin family. Requires Fe(3+) as cofactor.

Rubredoxin is a small nonheme, iron protein lacking acid-labile sulfide. Its single Fe, chelated to 4 Cys, functions as an electron acceptor and may also stabilize the conformation of the molecule. This is Rubredoxin from Acetoanaerobium sticklandii (strain ATCC 12662 / DSM 519 / JCM 1433 / CCUG 9281 / NCIMB 10654 / HF) (Clostridium sticklandii).